We begin with the raw amino-acid sequence, 317 residues long: 4-hydroxy-3-methylbut-2-enyl diphosphate reductase (317 aa).

Cysteine 12 is a [4Fe-4S] cluster binding site. (2E)-4-hydroxy-3-methylbut-2-enyl diphosphate contacts are provided by histidine 41 and histidine 74. Histidine 41 and histidine 74 together coordinate dimethylallyl diphosphate. 2 residues coordinate isopentenyl diphosphate: histidine 41 and histidine 74. Cysteine 96 contacts [4Fe-4S] cluster. A (2E)-4-hydroxy-3-methylbut-2-enyl diphosphate-binding site is contributed by histidine 124. Dimethylallyl diphosphate is bound at residue histidine 124. Histidine 124 contributes to the isopentenyl diphosphate binding site. Residue glutamate 126 is the Proton donor of the active site. Threonine 168 contacts (2E)-4-hydroxy-3-methylbut-2-enyl diphosphate. Cysteine 198 contacts [4Fe-4S] cluster. Residues serine 226, serine 227, asparagine 228, and serine 270 each contribute to the (2E)-4-hydroxy-3-methylbut-2-enyl diphosphate site. Dimethylallyl diphosphate contacts are provided by serine 226, serine 227, asparagine 228, and serine 270. 4 residues coordinate isopentenyl diphosphate: serine 226, serine 227, asparagine 228, and serine 270.

This sequence belongs to the IspH family. Requires [4Fe-4S] cluster as cofactor.

It catalyses the reaction isopentenyl diphosphate + 2 oxidized [2Fe-2S]-[ferredoxin] + H2O = (2E)-4-hydroxy-3-methylbut-2-enyl diphosphate + 2 reduced [2Fe-2S]-[ferredoxin] + 2 H(+). It carries out the reaction dimethylallyl diphosphate + 2 oxidized [2Fe-2S]-[ferredoxin] + H2O = (2E)-4-hydroxy-3-methylbut-2-enyl diphosphate + 2 reduced [2Fe-2S]-[ferredoxin] + 2 H(+). It functions in the pathway isoprenoid biosynthesis; dimethylallyl diphosphate biosynthesis; dimethylallyl diphosphate from (2E)-4-hydroxy-3-methylbutenyl diphosphate: step 1/1. It participates in isoprenoid biosynthesis; isopentenyl diphosphate biosynthesis via DXP pathway; isopentenyl diphosphate from 1-deoxy-D-xylulose 5-phosphate: step 6/6. Its function is as follows. Catalyzes the conversion of 1-hydroxy-2-methyl-2-(E)-butenyl 4-diphosphate (HMBPP) into a mixture of isopentenyl diphosphate (IPP) and dimethylallyl diphosphate (DMAPP). Acts in the terminal step of the DOXP/MEP pathway for isoprenoid precursor biosynthesis. The protein is 4-hydroxy-3-methylbut-2-enyl diphosphate reductase of Hahella chejuensis (strain KCTC 2396).